The chain runs to 550 residues: Copine-F (550 aa).

C2 domains follow at residues 1–115 (MAET…RLIG) and 123–246 (ITGK…PIIN). The VWFA domain occupies 296-521 (DLMVAIDCTE…DFQNEILRKL (226 aa)).

It belongs to the copine family.

The protein is Copine-F (cpnF) of Dictyostelium discoideum (Social amoeba).